Here is a 93-residue protein sequence, read N- to C-terminus: Protein LSO1 (93 aa).

Positions 1–73 (MHNTGKRYSE…TEKLRAKKER (73 aa)) are disordered. Residues 20-83 (ARKRRQAYEK…DQLLAAEEEA (64 aa)) adopt a coiled-coil conformation. Composition is skewed to basic and acidic residues over residues 25 to 49 (QAYE…EEGA) and 57 to 73 (LIME…KKER).

The protein resides in the nucleus. It is found in the cytoplasm. Functionally, likely to play a role in iron homeostasis. This is Protein LSO1 from Saccharomyces cerevisiae (strain ATCC 204508 / S288c) (Baker's yeast).